The following is a 521-amino-acid chain: Tigger transposable element-derived protein 6 (521 aa).

The region spanning 3–54 is the HTH psq-type domain; that stretch reads NKGNKKRRQFSLEEKMKVVGAVDSGKRKGDVAKEFGITPSTLSTFLKDRTKF. 2 DNA-binding regions (H-T-H motif) span residues 30–50 and 99–130; these read KGDV…FLKD and SVIR…FRDR. Positions 66-137 constitute an HTH CENPB-type domain; it reads QRKRMRSALY…RDRHGIALKA (72 aa). The region spanning 170 to 372 is the DDE-1 domain; the sequence is YSPDDIFNAD…VKPSTVVKCW (203 aa).

Belongs to the tigger transposable element derived protein family.

The protein resides in the nucleus. The sequence is that of Tigger transposable element-derived protein 6 (TIGD6) from Homo sapiens (Human).